The primary structure comprises 108 residues: uncharacterized protein (108 aa).

2 consecutive transmembrane segments (helical) span residues 32 to 52 (YFFFLLFCKLLNAAEAPLLAI) and 68 to 88 (SYLLLLITMLEGAEYFSLVVG).

It is found in the membrane. This is an uncharacterized protein from Saccharomyces cerevisiae (strain ATCC 204508 / S288c) (Baker's yeast).